Consider the following 413-residue polypeptide: MCACKFATYNSNIGAVKLLLDKGADINCMRKDGMSALSAVCKNLDLEFRSDFDTIKLLIERGADVNLTVDGHYTPLMWLIKNLSENDDRFSESKISSIKNLFESDDDDYFFENKRKNKYNALKLLLDNGANIEAKCDGETPLLLACKLSSEITSTKHIKILLKKGAKTNIESNDRKTPLMLLCKNCQQYLENEAVDVLIKYGKANINYQNSIGETALIYLCRISFMSESVQFLLEKGANPNIQDNSGNTALHYAVKRHEFEMVEILLRYNASPEIINKKGKNVFSNMHKISIGVVEQLCRYNINIQLSAAQKYSILQTPSFVNGVKLIGLIESNTKIKTIMDFTINVIPKKVLKIIYHENSLKMKLVKMAWLCRNYSIDKIITMENFWLFDYLNVETIDQLKYKITELTKYES.

ANK repeat units follow at residues 1–28 (MCAC…DINC), 32–67 (DGMS…DVNL), 68–104 (TVDG…LFES), 105–134 (DDDD…NIEA), 137–170 (DGET…KTNI), 174–208 (DRKT…NINY), 212–242 (IGET…NPNI), and 246–275 (SGNT…SPEI).

The chain is Putative ankyrin repeat protein L92 from Acanthamoeba polyphaga mimivirus (APMV).